Consider the following 103-residue polypeptide: MANQKIRIRLKAYDYALIDRSAQEIVETAKRTGAVVKGPIPLPTKIERFNILRSPHVNKTSREQLEIRTHLRLMDIVDWTDKTTDALMKLDLSAGVDVEIKVQ.

This sequence belongs to the universal ribosomal protein uS10 family. As to quaternary structure, part of the 30S ribosomal subunit.

In terms of biological role, involved in the binding of tRNA to the ribosomes. The sequence is that of Small ribosomal subunit protein uS10 from Neisseria meningitidis serogroup C / serotype 2a (strain ATCC 700532 / DSM 15464 / FAM18).